The sequence spans 338 residues: Phosphate acyltransferase (338 aa).

This sequence belongs to the PlsX family. In terms of assembly, homodimer. Probably interacts with PlsY.

It localises to the cytoplasm. It carries out the reaction a fatty acyl-[ACP] + phosphate = an acyl phosphate + holo-[ACP]. It participates in lipid metabolism; phospholipid metabolism. In terms of biological role, catalyzes the reversible formation of acyl-phosphate (acyl-PO(4)) from acyl-[acyl-carrier-protein] (acyl-ACP). This enzyme utilizes acyl-ACP as fatty acyl donor, but not acyl-CoA. The sequence is that of Phosphate acyltransferase from Alcanivorax borkumensis (strain ATCC 700651 / DSM 11573 / NCIMB 13689 / SK2).